The following is a 199-amino-acid chain: Calcium-binding protein CAST (199 aa).

Residues Met1–Lys13 show a composition bias toward basic and acidic residues. Residues Met1–Leu31 form a disordered region. 4 EF-hand domains span residues Leu36–Asp71, Ser75–Gly110, Gln125–Pro160, and Ser163–Pro198. Positions 49, 51, 53, and 60 each coordinate Ca(2+). Residues Asp138, Asn140, Asp142, Glu149, Asp178, Asp180, Arg182, and Glu187 each contribute to the Ca(2+) site.

Functionally, not known. Probably binds 3 calcium ions. This is Calcium-binding protein CAST from Solanum tuberosum (Potato).